Reading from the N-terminus, the 308-residue chain is Transaldolase (308 aa).

Lysine 125 functions as the Schiff-base intermediate with substrate in the catalytic mechanism.

This sequence belongs to the transaldolase family. Type 1 subfamily. Homodimer.

It localises to the cytoplasm. It carries out the reaction D-sedoheptulose 7-phosphate + D-glyceraldehyde 3-phosphate = D-erythrose 4-phosphate + beta-D-fructose 6-phosphate. Its pathway is carbohydrate degradation; pentose phosphate pathway; D-glyceraldehyde 3-phosphate and beta-D-fructose 6-phosphate from D-ribose 5-phosphate and D-xylulose 5-phosphate (non-oxidative stage): step 2/3. Transaldolase is important for the balance of metabolites in the pentose-phosphate pathway. The sequence is that of Transaldolase from Pseudomonas putida (strain W619).